Consider the following 965-residue polypeptide: Collagen alpha-1(I) chain (965 aa).

Residues 1–965 (GGISVPGPMG…PGPPGPPGPP (965 aa)) are disordered. 4-hydroxyproline occurs at positions 18, 21, 23, 32, 35, 38, 53, 68, 74, 83, and 89. A compositionally biased stretch (low complexity) spans 26–44 (QGFQGPPGEPGEPGSSGPM). Positions 56–70 (NGDDGEAGKPGRPGE) are enriched in basic and acidic residues. Position 92 is a 5-hydroxylysine; alternate (Lys92). O-linked (Gal...) hydroxylysine; alternate glycosylation occurs at Lys92. Ser98 is modified (phosphoserine). The span at 106–122 (DAGPAGPKGEPGSPGEN) shows a compositional bias: low complexity. 4-hydroxyproline occurs at positions 116, 119, 125, 139, 160, 169, 172, 199, 202, 214, 220, 229, 235, 238, and 253. Low complexity predominate over residues 139-157 (PGASGPAGARGNDGATGAA). A compositionally biased stretch (pro residues) spans 159–171 (PPGPTGPAGPPGF). Over residues 205–244 (AGAAGPAGNPGADGQPGAKGANGAPGIAGAPGFPGARGPS) the composition is skewed to low complexity. Lys256 carries the post-translational modification 5-hydroxylysine. 4-hydroxyproline occurs at positions 262, 265, 269, 278, 293, 299, 308, and 314. Gly residues predominate over residues 303 to 312 (GERGGPGSRG). The residue at position 323 (Lys323) is a 5-hydroxylysine. 4-hydroxyproline is present on residues Pro326, Pro332, Pro338, Pro347, Pro350, Pro359, Pro368, Pro374, Pro386, Pro395, Pro404, Pro407, Pro425, Pro442, Pro448, Pro454, Pro460, Pro466, Pro472, Pro484, Pro493, Pro506, Pro512, and Pro521. Over residues 341-367 (KGLTGSPGSPGPDGKTGPPGPAGQDGR) the composition is skewed to low complexity. A compositionally biased stretch (low complexity) spans 376-395 (ARGQAGVMGFPGPKGAAGEP). Residues 454-463 (PGEAGKPGEQ) are compositionally biased toward low complexity. Lys533 carries the post-translational modification 5-hydroxylysine. 3 positions are modified to 4-hydroxyproline: Pro539, Pro554, and Pro560. Positions 566-580 (SGPSGPAGPTGARGA) are enriched in low complexity. At Ser569 the chain carries Phosphoserine. Pro581, Pro587, Pro590, Pro599, Pro605, Pro623, Pro632, and Pro641 each carry 4-hydroxyproline. Residues 593 to 620 (AGFAGPPGADGQPGAKGEPGDAGAKGDA) show a composition bias toward low complexity. Lys644 is subject to 5-hydroxylysine. A compositionally biased stretch (low complexity) spans 649-665 (SAGPPGATGFPGAAGRV). 2 positions are modified to 4-hydroxyproline: Pro653 and Pro659. Pro667 carries the post-translational modification 3-hydroxyproline. 4-hydroxyproline occurs at positions 668, 677, 680, 716, 725, 743, 752, 755, 761, 776, 782, 788, 796, and 802. Residues 710–725 (SGEKGSPGADGPAGAP) show a composition bias toward low complexity. Residues 775–785 (PPGPMGPPGLA) are compositionally biased toward pro residues. A 5-hydroxylysine modification is found at Lys811. 4-hydroxyproline is present on residues Pro819, Pro822, and Pro825. The span at 819–831 (PGAPGAPGAPGPV) shows a compositional bias: pro residues. The segment covering 851-865 (AGPAGARGPAGPQGP) has biased composition (low complexity). Over residues 866 to 880 (RGDKGETGEQGDRGI) the composition is skewed to basic and acidic residues. At Lys869 the chain carries 5-hydroxylysine. A 5-hydroxylysine; alternate modification is found at Lys881. An O-linked (Gal...) hydroxylysine; alternate glycan is attached at Lys881. 4-hydroxyproline is present on residues Pro896, Pro899, Pro917, and Pro932. Residues 899 to 932 (PGEQGPSGASGPAGPRGPPGSAGSPGKDGLNGLP) show a composition bias toward low complexity. The residue at position 937 (Pro937) is a 3-hydroxyproline. Residue Pro938 is modified to 4-hydroxyproline. The span at 950 to 965 (VGPPGPPGPPGPPGPP) shows a compositional bias: pro residues. Position 952 is a 3-hydroxyproline (Pro952). At Pro953 the chain carries 4-hydroxyproline. Position 955 is a 3-hydroxyproline (Pro955). At Pro956 the chain carries 4-hydroxyproline. A 3-hydroxyproline modification is found at Pro958. Residues Pro959, Pro962, and Pro965 each carry the 4-hydroxyproline modification.

The protein belongs to the fibrillar collagen family. In terms of assembly, trimers of one alpha 2(I) and two alpha 1(I) chains. Post-translationally, contains mostly 4-hydroxyproline. Proline residues at the third position of the tripeptide repeating unit (G-X-Y) are hydroxylated in some or all of the chains. Contains 3-hydroxyproline at a few sites. This modification occurs on the first proline residue in the sequence motif Gly-Pro-Hyp, where Hyp is 4-hydroxyproline. In terms of processing, lysine residues at the third position of the tripeptide repeating unit (G-X-Y) are 5-hydroxylated in some or all of the chains. Post-translationally, O-glycosylated on hydroxylated lysine residues. The O-linked glycan consists of a Glc-Gal disaccharide. Expressed in bones.

It localises to the secreted. The protein localises to the extracellular space. The protein resides in the extracellular matrix. Functionally, type I collagen is a member of group I collagen (fibrillar forming collagen). The chain is Collagen alpha-1(I) chain from Acratocnus sp. (strain SLP-2019) (Ground sloth).